The chain runs to 96 residues: Co-chaperonin GroES (96 aa).

Belongs to the GroES chaperonin family. In terms of assembly, heptamer of 7 subunits arranged in a ring. Interacts with the chaperonin GroEL.

It is found in the cytoplasm. Together with the chaperonin GroEL, plays an essential role in assisting protein folding. The GroEL-GroES system forms a nano-cage that allows encapsulation of the non-native substrate proteins and provides a physical environment optimized to promote and accelerate protein folding. GroES binds to the apical surface of the GroEL ring, thereby capping the opening of the GroEL channel. This Acinetobacter baylyi (strain ATCC 33305 / BD413 / ADP1) protein is Co-chaperonin GroES.